The sequence spans 153 residues: Vasotocin-neurophysin VT 1 (153 aa).

The first 20 residues, 1 to 20 (MPYSTFPLLWVLGLLALSSA), serve as a signal peptide directing secretion. A disulfide bond links Cys21 and Cys26. Gly29 carries the post-translational modification Glycine amide. Disulfide bonds link Cys41–Cys85, Cys44–Cys58, Cys52–Cys75, Cys59–Cys65, Cys92–Cys104, Cys98–Cys116, and Cys105–Cys110.

This sequence belongs to the vasopressin/oxytocin family. Post-translationally, seven disulfide bonds are present in neurophysin.

It is found in the secreted. In terms of biological role, vasotocin is an antidiuretic hormone. This Oncorhynchus keta (Chum salmon) protein is Vasotocin-neurophysin VT 1.